The sequence spans 218 residues: MTQDEMKKAAGWAALKYVEKGSIVGVGTGSTVNHFIDALGTIKDEIKGAVSSSIASTAKLEALGIRVYDCNDVSELDIYVDGADEINPERDMIKGGGAALTREKIVAAIAKKFVCIVDGTKAVDVLGNFPLPVEVIPMARSYVARELVKLGGDPVYREGVITDNGNVILDVYNMKITHPKDLESKINGIAGVVTVGLFAHRGADVVITGTPQGAKIEE.

Substrate-binding positions include Thr28–Thr31, Asp81–Asp84, and Lys94–Gly97. The active-site Proton acceptor is the Glu103. Lys121 is a binding site for substrate.

It belongs to the ribose 5-phosphate isomerase family. Homodimer.

It carries out the reaction aldehydo-D-ribose 5-phosphate = D-ribulose 5-phosphate. The protein operates within carbohydrate degradation; pentose phosphate pathway; D-ribose 5-phosphate from D-ribulose 5-phosphate (non-oxidative stage): step 1/1. Functionally, catalyzes the reversible conversion of ribose-5-phosphate to ribulose 5-phosphate. This Vibrio cholerae serotype O1 (strain ATCC 39541 / Classical Ogawa 395 / O395) protein is Ribose-5-phosphate isomerase A.